Here is a 207-residue protein sequence, read N- to C-terminus: 2,3-bisphosphoglycerate-dependent phosphoglycerate mutase (207 aa).

Substrate-binding positions include 10–17 (RHGQSEWN), 23–24 (TG), arginine 62, 89–92 (ERDY), lysine 100, 116–117 (RR), and 160–161 (GN). The active-site Tele-phosphohistidine intermediate is the histidine 11. The Proton donor/acceptor role is filled by glutamate 89.

It belongs to the phosphoglycerate mutase family. BPG-dependent PGAM subfamily. In terms of assembly, homodimer.

The catalysed reaction is (2R)-2-phosphoglycerate = (2R)-3-phosphoglycerate. Its pathway is carbohydrate degradation; glycolysis; pyruvate from D-glyceraldehyde 3-phosphate: step 3/5. Its function is as follows. Catalyzes the interconversion of 2-phosphoglycerate and 3-phosphoglycerate. The chain is 2,3-bisphosphoglycerate-dependent phosphoglycerate mutase from Afipia carboxidovorans (strain ATCC 49405 / DSM 1227 / KCTC 32145 / OM5) (Oligotropha carboxidovorans).